Consider the following 310-residue polypeptide: Thioredoxin reductase (310 aa).

34 to 41 (NGMQPGGQ) is an FAD binding site. A disulfide bond links Cys135 and Cys138. FAD is bound at residue 281–290 (DVQDKIYRQA).

It belongs to the class-II pyridine nucleotide-disulfide oxidoreductase family. As to quaternary structure, homodimer. The cofactor is FAD.

The protein localises to the cytoplasm. The catalysed reaction is [thioredoxin]-dithiol + NADP(+) = [thioredoxin]-disulfide + NADPH + H(+). The sequence is that of Thioredoxin reductase (trxB) from Rickettsia typhi (strain ATCC VR-144 / Wilmington).